The chain runs to 270 residues: 5'-AMP-activated protein kinase subunit beta-1 (270 aa).

A disordered region spans residues 1-43; sequence MGNTSSERAALERQAGHKTPRRDSSGGTKDGDRPKILMDSPED. Gly-2 carries N-myristoyl glycine lipidation. A Phosphothreonine modification is found at Thr-4. Ser-5 and Ser-6 each carry phosphoserine. The span at 9–36 shows a compositional bias: basic and acidic residues; that stretch reads AALERQAGHKTPRRDSSGGTKDGDRPKI. Position 19 is a phosphothreonine (Thr-19). Ser-24 and Ser-25 each carry phosphoserine; by autocatalysis. Phosphoserine is present on residues Ser-40, Ser-96, and Ser-101. The glycogen-binding domain stretch occupies residues 68 to 163; it reads EVNEKAPAQA…QVKKTDFEVF (96 aa). Ser-108 is subject to Phosphoserine; by autocatalysis. The residue at position 148 (Thr-148) is a Phosphothreonine. Residue Ser-182 is modified to Phosphoserine. The residue at position 201 (Lys-201) is an N6-succinyllysine.

Belongs to the 5'-AMP-activated protein kinase beta subunit family. In terms of assembly, AMPK is a heterotrimer of an alpha catalytic subunit (PRKAA1 or PRKAA2), a beta (PRKAB1 or PRKAB2) and a gamma non-catalytic subunits (PRKAG1, PRKAG2 or PRKAG3). Interacts with FNIP1 and FNIP2. In terms of processing, phosphorylated when associated with the catalytic subunit (PRKAA1 or PRKAA2). Phosphorylated by ULK1; leading to negatively regulate AMPK activity and suggesting the existence of a regulatory feedback loop between ULK1 and AMPK. In terms of tissue distribution, highly expressed in kidney, heart, white adipose tissue, lung and spleen.

Functionally, non-catalytic subunit of AMP-activated protein kinase (AMPK), an energy sensor protein kinase that plays a key role in regulating cellular energy metabolism. In response to reduction of intracellular ATP levels, AMPK activates energy-producing pathways and inhibits energy-consuming processes: inhibits protein, carbohydrate and lipid biosynthesis, as well as cell growth and proliferation. AMPK acts via direct phosphorylation of metabolic enzymes, and by longer-term effects via phosphorylation of transcription regulators. Also acts as a regulator of cellular polarity by remodeling the actin cytoskeleton; probably by indirectly activating myosin. Beta non-catalytic subunit acts as a scaffold on which the AMPK complex assembles, via its C-terminus that bridges alpha (PRKAA1 or PRKAA2) and gamma subunits (PRKAG1, PRKAG2 or PRKAG3). The chain is 5'-AMP-activated protein kinase subunit beta-1 (Prkab1) from Rattus norvegicus (Rat).